The following is a 33-amino-acid chain: U23-ctenitoxin-Pn1a (33 aa).

3 disulfide bridges follow: Cys3/Cys16, Cys10/Cys21, and Cys15/Cys30.

Expressed by the venom gland.

It is found in the secreted. In terms of biological role, non-toxic to mice. This chain is U23-ctenitoxin-Pn1a, found in Phoneutria nigriventer (Brazilian armed spider).